The sequence spans 416 residues: UDP-N-acetylglucosamine 1-carboxyvinyltransferase (416 aa).

K22–N23 is a phosphoenolpyruvate binding site. Residue R92 participates in UDP-N-acetyl-alpha-D-glucosamine binding. The active-site Proton donor is the C116. 2-(S-cysteinyl)pyruvic acid O-phosphothioketal is present on C116. Residues R121–Q125, D304, and I326 each bind UDP-N-acetyl-alpha-D-glucosamine.

This sequence belongs to the EPSP synthase family. MurA subfamily.

It localises to the cytoplasm. It catalyses the reaction phosphoenolpyruvate + UDP-N-acetyl-alpha-D-glucosamine = UDP-N-acetyl-3-O-(1-carboxyvinyl)-alpha-D-glucosamine + phosphate. The protein operates within cell wall biogenesis; peptidoglycan biosynthesis. Its function is as follows. Cell wall formation. Adds enolpyruvyl to UDP-N-acetylglucosamine. The sequence is that of UDP-N-acetylglucosamine 1-carboxyvinyltransferase from Cupriavidus pinatubonensis (strain JMP 134 / LMG 1197) (Cupriavidus necator (strain JMP 134)).